Consider the following 308-residue polypeptide: uncharacterized protein (308 aa).

Polar residues-rich tracts occupy residues 138–148 (WSFTKHGSNTP) and 205–229 (STSH…QPPS). 2 disordered regions span residues 138-157 (WSFT…PLCN) and 205-235 (STSH…TDAS).

The protein localises to the cytoplasm. This is an uncharacterized protein from Schizosaccharomyces pombe (strain 972 / ATCC 24843) (Fission yeast).